We begin with the raw amino-acid sequence, 92 residues long: Small ribosomal subunit protein uS19 (92 aa).

This sequence belongs to the universal ribosomal protein uS19 family.

Protein S19 forms a complex with S13 that binds strongly to the 16S ribosomal RNA. This is Small ribosomal subunit protein uS19 from Photorhabdus laumondii subsp. laumondii (strain DSM 15139 / CIP 105565 / TT01) (Photorhabdus luminescens subsp. laumondii).